Consider the following 574-residue polypeptide: Probable cytochrome c oxidase subunit 1 (574 aa).

A helical transmembrane segment spans residues 40–60 (IGIMYCVACFIFFFVGGLLAL). His-86 is a binding site for Fe(II)-heme a. Helical transmembrane passes span 89-109 (IMLL…VLPL), 121-141 (LNAF…AGFI), 170-190 (LWIM…VNMI), 213-233 (ILVT…ALFG), 258-278 (LFWF…FGIV), and 290-310 (IFGY…SVAV). Residues His-264 and Tyr-268 each coordinate Cu cation. Positions 264-268 (HPEVY) form a cross-link, 1'-histidyl-3'-tyrosine (His-Tyr). The Cu cation site is built by His-313 and His-314. Transmembrane regions (helical) follow at residues 315 to 335 (MFAT…LIAV) and 359 to 379 (MLFS…GVLL). Heme a3 is bound at residue His-397. 3 helical membrane-spanning segments follow: residues 398-418 (FHYV…YFWF), 433-453 (LHFW…HWLG), and 476-496 (VSTI…WNVF). Position 399 (His-399) interacts with Fe(II)-heme a.

The protein belongs to the heme-copper respiratory oxidase family. Associates with subunits II, III and IV to form cytochrome c oxidase. The cofactor is Cu(2+). Requires heme as cofactor.

The protein resides in the cell membrane. It carries out the reaction 4 Fe(II)-[cytochrome c] + O2 + 8 H(+)(in) = 4 Fe(III)-[cytochrome c] + 2 H2O + 4 H(+)(out). It functions in the pathway energy metabolism; oxidative phosphorylation. In terms of biological role, cytochrome c oxidase is the component of the respiratory chain that catalyzes the reduction of oxygen to water. Subunits 1-3 form the functional core of the enzyme complex. CO I is the catalytic subunit of the enzyme. Electrons originating in cytochrome c are transferred via the copper A center of subunit 2 and heme A of subunit 1 to the bimetallic center formed by heme A3 and copper B. The sequence is that of Probable cytochrome c oxidase subunit 1 (ctaD) from Mycobacterium leprae (strain TN).